The chain runs to 416 residues: PRKCA-binding protein (416 aa).

In terms of domain architecture, PDZ spans 22–105; sequence KVTLQKDAQN…EVTIHYNKLQ (84 aa). 2 residues coordinate Zn(2+): Cys-44 and Cys-46. Position 82 is a phosphothreonine (Thr-82). The AH domain maps to 144–357; it reads LCNDGLVKRL…CYAVLQDADV (214 aa). Positions 373–416 are disordered; it reads PNQGSFTDGEEEDEEEEDGAAREVSKDACGATGPTDKGGSWCDS. A compositionally biased stretch (acidic residues) spans 380-390; the sequence is DGEEEDEEEED. A lipid anchor (S-palmitoyl cysteine; by DHHC8) is attached at Cys-414.

As to quaternary structure, monomer and homodimer. Interacts with CXADR. Interacts presynaptically with the glutamate receptors GRIA2, GRIA3, GRIK3, isoform 3 of GRIA4, isoform A of GRM4, GRM7 and GRM8; with NAPA and NAPB; and with BTG2. The interaction with NAPA and NAPB disrupts the interaction with GRIA2, conducting to the internalization of GRIA2. Interacts with PRKCA; with the amine transporters SLC6A2 and SLC6A3; with the channels ASIC1 and ASIC2; with the GTP-binding proteins ARF1 and ARF3; with the ephrin receptor tyrosine kinases EPHA7, EPHB1 and EPHB2; with ERBB2 and through its PDZ domain with the C-terminal tail of PRLHR. Interacts with UNC5A. Interacts (via AH domain) with NCS1/FREQ; in a calcium-dependent manner. Interacts with F-actin and associates with the ARP2/3 complex. Interacts (via PDZ domain) with ARF1 (activated); the interaction blocks Arp2/3 complex inhibition. Interacts with SORCS3. Phosphorylation at Thr-82 appears to inhibit the interaction with AMPA receptors. Phosphorylated on tyrosine residues by EPHB2 and on serine or threonine residues by PKC. In terms of processing, palmitoylation on Cys-414 is essential for long-term synaptic depression (LTD). Expressed in all tissues examined, with highest levels in brain and testes and lowest levels in lung.

The protein localises to the cytoplasm. The protein resides in the perinuclear region. It is found in the membrane. Its subcellular location is the postsynaptic density. It localises to the synapse. The protein localises to the synaptosome. The protein resides in the cytoskeleton. In terms of biological role, probable adapter protein that bind to and organize the subcellular localization of a variety of membrane proteins containing some PDZ recognition sequence. Involved in the clustering of various receptors, possibly by acting at the receptor internalization level. Plays a role in synaptic plasticity by regulating the trafficking and internalization of AMPA receptors. May be regulated upon PRKCA activation. May regulate ASIC1/ASIC3 channel. Regulates actin polymerization by inhibiting the actin-nucleating activity of the Arp2/3 complex; the function is competitive with nucleation promoting factors and is linked to neuronal morphology regulation and AMPA receptor (AMPAR) endocytosis. Via interaction with the Arp2/3 complex involved in regulation of synaptic plasicity of excitatory synapses and required for spine shrinkage during long-term depression (LTD). Involved in regulation of astrocyte morphology, antagonistic to Arp2/3 complex activator WASL/N-WASP function. This chain is PRKCA-binding protein (Pick1), found in Mus musculus (Mouse).